Here is a 201-residue protein sequence, read N- to C-terminus: Recombination protein RecR (201 aa).

Residues 60 to 75 (CQVCGNVDVRDPCTVC) form a C4-type zinc finger. The Toprim domain maps to 83–178 (SVLVVVAEVA…KVTRLAHGVP (96 aa)).

Belongs to the RecR family.

In terms of biological role, may play a role in DNA repair. It seems to be involved in an RecBC-independent recombinational process of DNA repair. It may act with RecF and RecO. The protein is Recombination protein RecR of Azorhizobium caulinodans (strain ATCC 43989 / DSM 5975 / JCM 20966 / LMG 6465 / NBRC 14845 / NCIMB 13405 / ORS 571).